A 416-amino-acid chain; its full sequence is Solute carrier family 35 member D3 (416 aa).

10 consecutive transmembrane segments (helical) span residues 9–29 (VLGI…NILL), 38–58 (FSFL…SLEL), 64–84 (LIAV…VAVL), 103–123 (MYVV…VLVL), 131–151 (GVLA…AGDL), 155–175 (PIGY…LVLI), 187–207 (LTAQ…CSFA), 224–244 (AMVC…FTTL), 257–277 (FVGV…FSDV), and 280–300 (TSLF…YCVA). Positions 334-384 (MEELPGEGGNGRSEGGEAAGGPAQESRQEVRGSPRGVPLVAGSSEEGSRRS) are disordered. Residues 339 to 352 (GEGGNGRSEGGEAA) are compositionally biased toward gly residues.

Belongs to the TPT transporter family. SLC35D subfamily. In terms of assembly, could interact with ATG14, BECN1 and PIK3C3 that form the PI3KC3-C1/AIC/autophagy initiation complex; enhancing the formation of the AIC and promoting autophagy.

It is found in the cytoplasmic vesicle. Its subcellular location is the secretory vesicle. It localises to the synaptic vesicle membrane. The protein resides in the early endosome membrane. The protein localises to the endoplasmic reticulum membrane. The enzyme catalyses UDP-alpha-D-glucose(in) = UDP-alpha-D-glucose(out). With respect to regulation, inhibited by proton uncouplers that directly abolish the proton electrochemical gradient. Its function is as follows. Probable UDP-glucose transmembrane transporter involved in UDP-glucose transport from the cytosol to the lumen of synaptic vesicles. It is involved in platelet dense granules maturation. In terms of biological role, alternatively, could function as a molecular adapter enhancing the formation of the PI3KC3-C1/AIC/autophagy initiation complex to promote autophagy in dopaminergic neurons. Could also regulate the plasma membrane localization of the D(1A) dopamine receptor/DRD1 and dopamine signaling. The polypeptide is Solute carrier family 35 member D3 (Homo sapiens (Human)).